The sequence spans 459 residues: Interleukin-1 receptor-associated kinase 4 (459 aa).

Met-1 carries the N-acetylmethionine modification. Positions 20-104 (RKLSDFIDPQ…APATLLLPDA (85 aa)) constitute a Death domain. Residue Lys-34 is modified to N6-acetyllysine. The interval 115 to 161 (REAATVAQTHGPCQEKDRTSVMPMPKLEHSCEPPDSSSPDNRSVESS) is disordered. The 269-residue stretch at 186 to 454 (SAGGNRMGEG…PDIAKVQQLL (269 aa)) folds into the Protein kinase domain. Residues 192–200 (MGEGGFGVV) and Lys-213 each bind ATP. Catalysis depends on Asp-311, which acts as the Proton acceptor. ATP contacts are provided by residues 313–316 (KSAN) and Asp-329. A phosphothreonine mark is found at Thr-342 and Thr-345. The residue at position 346 (Ser-346) is a Phosphoserine.

It belongs to the protein kinase superfamily. TKL Ser/Thr protein kinase family. Pelle subfamily. In terms of assembly, associates with MYD88 and IRAK2 to form a ternary complex called the Myddosome. Once phosphorylated, IRAK4 dissociates from the receptor complex and then associates with the TNF receptor-associated factor 6 (TRAF6), IRAK1, and PELI1; this intermediate complex is required for subsequent NF-kappa-B activation. Direct binding of SMAD6 to PELI1 prevents complex formation and hence negatively regulates IL1R-TLR signaling and eventually NF-kappa-B-mediated gene expression. Interacts with IL1RL1. Interacts (when phosphorylated) with IRAK1. May interact (when phosphorylated) with IRAK3. Mg(2+) is required as a cofactor. Post-translationally, phosphorylated.

Its subcellular location is the cytoplasm. It carries out the reaction L-seryl-[protein] + ATP = O-phospho-L-seryl-[protein] + ADP + H(+). The catalysed reaction is L-threonyl-[protein] + ATP = O-phospho-L-threonyl-[protein] + ADP + H(+). Serine/threonine-protein kinase that plays a critical role in initiating innate immune response against foreign pathogens. Involved in Toll-like receptor (TLR) and IL-1R signaling pathways. Is rapidly recruited by MYD88 to the receptor-signaling complex upon TLR activation to form the Myddosome together with IRAK2. Phosphorylates initially IRAK1, thus stimulating the kinase activity and intensive autophosphorylation of IRAK1. Phosphorylates E3 ubiquitin ligases Pellino proteins (PELI1, PELI2 and PELI3) to promote pellino-mediated polyubiquitination of IRAK1. Then, the ubiquitin-binding domain of IKBKG/NEMO binds to polyubiquitinated IRAK1 bringing together the IRAK1-MAP3K7/TAK1-TRAF6 complex and the NEMO-IKKA-IKKB complex. In turn, MAP3K7/TAK1 activates IKKs (CHUK/IKKA and IKBKB/IKKB) leading to NF-kappa-B nuclear translocation and activation. Alternatively, phosphorylates TIRAP to promote its ubiquitination and subsequent degradation. Phosphorylates NCF1 and regulates NADPH oxidase activation after LPS stimulation suggesting a similar mechanism during microbial infections. In Mus musculus (Mouse), this protein is Interleukin-1 receptor-associated kinase 4 (Irak4).